Reading from the N-terminus, the 158-residue chain is MNDLPFWKSKTLAEMSVPEWESLCDGCGLCCLNKIEEWDSGDIYFTSVSCKLLDGESCRCSSYENRWDFVPDCVQLTKENVPDIAWLPPTCGYRLVNEGRDLYWWHPLVSGDPETVHAAGISARGRSINENEIDLDDLEDYVVDWPLTVGEEKDDEDA.

It belongs to the UPF0260 family.

This Rhizobium johnstonii (strain DSM 114642 / LMG 32736 / 3841) (Rhizobium leguminosarum bv. viciae) protein is UPF0260 protein RL1394.